The chain runs to 68 residues: Large ribosomal subunit protein bL35 (68 aa).

It belongs to the bacterial ribosomal protein bL35 family.

This Orientia tsutsugamushi (strain Boryong) (Rickettsia tsutsugamushi) protein is Large ribosomal subunit protein bL35.